A 236-amino-acid chain; its full sequence is uncharacterized protein (236 aa).

3 residues coordinate NADP(+): aspartate 22, asparagine 49, and lysine 82. Residues serine 100 and tyrosine 114 each act as proton donor in the active site. Residues tyrosine 114 and lysine 118 each contribute to the NADP(+) site. Lysine 118 (lowers pKa of active site Tyr) is an active-site residue.

It belongs to the short-chain dehydrogenases/reductases (SDR) family.

Its subcellular location is the cytoplasm. The protein resides in the nucleus. This is an uncharacterized protein from Schizosaccharomyces pombe (strain 972 / ATCC 24843) (Fission yeast).